The following is a 216-amino-acid chain: MDDQIKEIRQKKHQQYLDHLNGIIPNNQDKQNHIVVPNLINQINPINATNQINPINTTGQRNHVLDKIKFNYAAIRIQRFIRKKMFEPKCINEEEILSIPSIYRLRIDITDMHINEYNEEDIPNDILEYHRIIYKSINFSTDSTLFFRYCFDIRKLYPIRHQQINIFGEYFYLQPDDHKYINCIWKKVNNITSESIRYLTDFDYHKSLSVDSHKSN.

This is an uncharacterized protein from Acanthamoeba polyphaga mimivirus (APMV).